The sequence spans 212 residues: MPTLWDITPAVDTATPVWPGDTPVGIERVWRMEAGSPVNVARLTLSPHTGAHTDAPLHYDAEGVAIGEVPLDAYLGRCRVIHCIGASPVVTPQHLSGSLDDLPPRVLLRTYRNAPTAAWDSAFCAVAPDTIDLLAARGVKLIGIDTPSLDPQESKTMDAHHRIRTHRMAILEGIVLDDVAPGDYELIALPLKLTTLDASPVRAILRALPESQ.

Position 18 (W18) interacts with substrate. Residues H48, H52, and D54 each coordinate Zn(2+). The Proton donor/acceptor role is filled by H58. Zn(2+) is bound by residues H160 and E172.

Belongs to the Cyclase 1 superfamily. KynB family. In terms of assembly, homodimer. Requires Zn(2+) as cofactor.

The catalysed reaction is N-formyl-L-kynurenine + H2O = L-kynurenine + formate + H(+). The protein operates within amino-acid degradation; L-tryptophan degradation via kynurenine pathway; L-kynurenine from L-tryptophan: step 2/2. In terms of biological role, catalyzes the hydrolysis of N-formyl-L-kynurenine to L-kynurenine, the second step in the kynurenine pathway of tryptophan degradation. This chain is Kynurenine formamidase, found in Paraburkholderia phytofirmans (strain DSM 17436 / LMG 22146 / PsJN) (Burkholderia phytofirmans).